Here is a 142-residue protein sequence, read N- to C-terminus: ATP synthase epsilon chain (142 aa).

It belongs to the ATPase epsilon chain family. F-type ATPases have 2 components, CF(1) - the catalytic core - and CF(0) - the membrane proton channel. CF(1) has five subunits: alpha(3), beta(3), gamma(1), delta(1), epsilon(1). CF(0) has three main subunits: a, b and c.

Its subcellular location is the cell inner membrane. Functionally, produces ATP from ADP in the presence of a proton gradient across the membrane. This chain is ATP synthase epsilon chain, found in Shewanella woodyi (strain ATCC 51908 / MS32).